Here is a 93-residue protein sequence, read N- to C-terminus: Large ribosomal subunit protein uL23 (93 aa).

The protein belongs to the universal ribosomal protein uL23 family. In terms of assembly, part of the 50S ribosomal subunit. Contacts protein L29, and trigger factor when it is bound to the ribosome.

Its function is as follows. One of the early assembly proteins it binds 23S rRNA. One of the proteins that surrounds the polypeptide exit tunnel on the outside of the ribosome. Forms the main docking site for trigger factor binding to the ribosome. The polypeptide is Large ribosomal subunit protein uL23 (Campylobacter hominis (strain ATCC BAA-381 / DSM 21671 / CCUG 45161 / LMG 19568 / NCTC 13146 / CH001A)).